Here is a 264-residue protein sequence, read N- to C-terminus: Tryptophan synthase alpha chain (264 aa).

Residues Glu49 and Asp60 each act as proton acceptor in the active site.

The protein belongs to the TrpA family. In terms of assembly, tetramer of two alpha and two beta chains.

The enzyme catalyses (1S,2R)-1-C-(indol-3-yl)glycerol 3-phosphate + L-serine = D-glyceraldehyde 3-phosphate + L-tryptophan + H2O. The protein operates within amino-acid biosynthesis; L-tryptophan biosynthesis; L-tryptophan from chorismate: step 5/5. In terms of biological role, the alpha subunit is responsible for the aldol cleavage of indoleglycerol phosphate to indole and glyceraldehyde 3-phosphate. This is Tryptophan synthase alpha chain from Synechocystis sp. (strain ATCC 27184 / PCC 6803 / Kazusa).